Reading from the N-terminus, the 501-residue chain is Beta-secretase 1 (501 aa).

Residues 1-21 form the signal peptide; it reads MAPALRWLLLWVGSGMLPAQG. A propeptide spanning residues 22 to 45 is cleaved from the precursor; the sequence is THLGIRLPLRSGLAGPPLGLRLPR. Topologically, residues 22 to 457 are extracellular; that stretch reads THLGIRLPLR…PQTDESTLMT (436 aa). The 342-residue stretch at 75 to 416 folds into the Peptidase A1 domain; the sequence is YYVEMTVGSP…DRARKRIGFA (342 aa). Residue aspartate 93 is part of the active site. Lysine 126 carries the N6-acetyllysine modification. N-linked (GlcNAc...) asparagine glycosylation is found at asparagine 153, asparagine 172, and asparagine 223. 3 disulfides stabilise this stretch: cysteine 216–cysteine 420, cysteine 278–cysteine 443, and cysteine 330–cysteine 380. 3 positions are modified to N6-acetyllysine: lysine 275, lysine 279, and lysine 285. Aspartate 289 is a catalytic residue. N6-acetyllysine occurs at positions 299, 300, and 307. N-linked (GlcNAc...) asparagine glycosylation occurs at asparagine 354. Residues 458–478 form a helical membrane-spanning segment; that stretch reads IAYVMAAICALFMLPLCLMVC. Residues cysteine 474, cysteine 478, cysteine 482, and cysteine 485 are each lipidated (S-palmitoyl cysteine). Residues 479 to 501 are Cytoplasmic-facing; that stretch reads QWRCLRCLRHQHDDFADDISLLK. Residues 479-501 are interaction with RTN3; that stretch reads QWRCLRCLRHQHDDFADDISLLK. Residues 496-500 carry the DXXLL motif; it reads DISLL. Serine 498 is subject to Phosphoserine. Lysine 501 participates in a covalent cross-link: Glycyl lysine isopeptide (Lys-Gly) (interchain with G-Cter in ubiquitin).

The protein belongs to the peptidase A1 family. As to quaternary structure, monomer. Interacts (via DXXLL motif) with GGA1, GGA2 and GGA3 (via their VHS domain); the interaction highly increases when BACE1 is phosphorylated at Ser-498. Interacts with RTN1; RTN2; RTN3 and RTN4; the interaction leads to inhibition of amyloid precursor protein processing. Interacts with SNX6. Interacts with PCSK9. Interacts with NAT8 and NAT8B. Interacts with BIN1. Interacts (via extracellular domain) with ADAM10 (via extracellular domain). Interacts with SORL1; this interaction may affect binding with APP and hence reduce APP cleavage. Interacts with NRDC AND NRG1. Palmitoylation mediates lipid raft localization. Post-translationally, acetylated in the endoplasmic reticulum at Lys-126, Lys-275, Lys-279, Lys-285, Lys-299, Lys-300 and Lys-307. Acetylation by NAT8 and NAT8B is transient and deacetylation probably occurs in the Golgi. Acetylation regulates the maturation, the transport to the plasma membrane, the stability and the expression of the protein. In terms of processing, ubiquitinated at Lys-501, ubiquitination leads to lysosomal degradation. Monoubiquitinated and 'Lys-63'-linked polyubitinated. Deubiquitnated by USP8; inhibits lysosomal degradation. Phosphorylation at Ser-498 is required for interaction with GGA1 and retrograded transport from endosomal compartments to the trans-Golgi network. Non-phosphorylated BACE1 enters a direct recycling route to the cell surface. Post-translationally, N-Glycosylated. Addition of a bisecting N-acetylglucosamine by MGAT3 blocks lysosomal targeting, further degradation and is required for maintaining stability under stress conditions.

It is found in the cell membrane. The protein resides in the golgi apparatus. The protein localises to the trans-Golgi network. Its subcellular location is the endoplasmic reticulum. It localises to the endosome. It is found in the cell surface. The protein resides in the cytoplasmic vesicle membrane. The protein localises to the membrane raft. Its subcellular location is the lysosome. It localises to the late endosome. It is found in the early endosome. The protein resides in the recycling endosome. The protein localises to the cell projection. Its subcellular location is the axon. It localises to the dendrite. The catalysed reaction is Broad endopeptidase specificity. Cleaves Glu-Val-Asn-Leu-|-Asp-Ala-Glu-Phe in the Swedish variant of Alzheimer's amyloid precursor protein.. With respect to regulation, inhibited by RTN3 and RTN4. In terms of biological role, responsible for the proteolytic processing of the amyloid precursor protein (APP). Cleaves at the N-terminus of the A-beta peptide sequence, between residues 671 and 672 of APP, leads to the generation and extracellular release of beta-cleaved soluble APP, and a corresponding cell-associated C-terminal fragment which is later released by gamma-secretase. Cleaves CHL1. This is Beta-secretase 1 (Bace1) from Rattus norvegicus (Rat).